Here is a 629-residue protein sequence, read N- to C-terminus: DNA mismatch repair protein MutL (629 aa).

The segment at 376–396 (QYHEKPQQNQPHFSNTPVLPN) is disordered. Residues 382–396 (QQNQPHFSNTPVLPN) are compositionally biased toward polar residues.

Belongs to the DNA mismatch repair MutL/HexB family.

Its function is as follows. This protein is involved in the repair of mismatches in DNA. It is required for dam-dependent methyl-directed DNA mismatch repair. May act as a 'molecular matchmaker', a protein that promotes the formation of a stable complex between two or more DNA-binding proteins in an ATP-dependent manner without itself being part of a final effector complex. In Haemophilus influenzae (strain PittEE), this protein is DNA mismatch repair protein MutL.